The chain runs to 200 residues: Recombination protein RecR (200 aa).

The C4-type zinc-finger motif lies at 57–72; the sequence is CRLCRTLTEEELCPQC. The region spanning 80 to 175 is the Toprim domain; that stretch reads TLLCVVEGPT…VASRIAHGVP (96 aa).

This sequence belongs to the RecR family.

Functionally, may play a role in DNA repair. It seems to be involved in an RecBC-independent recombinational process of DNA repair. It may act with RecF and RecO. The sequence is that of Recombination protein RecR from Pseudomonas syringae pv. tomato (strain ATCC BAA-871 / DC3000).